The following is a 178-amino-acid chain: Neuroblastoma suppressor of tumorigenicity 1 (178 aa).

Residues Met1–Ala16 form the signal peptide. Disulfide bonds link Cys34/Cys84, Cys48/Cys98, Cys58/Cys117, Cys62/Cys119, and Cys81/Cys122. The CTCK domain occupies Cys34 to Gly123. The disordered stretch occupies residues Asn132 to Asp178. Low complexity predominate over residues Ser140–Pro160.

This sequence belongs to the DAN family. Homodimer.

It is found in the secreted. In terms of biological role, possible candidate as a tumor suppressor gene of neuroblastoma. May play an important role in preventing cells from entering the final stage (G1/S) of the transformation process. This Mus musculus (Mouse) protein is Neuroblastoma suppressor of tumorigenicity 1 (Nbl1).